A 616-amino-acid chain; its full sequence is Schwannomin-interacting protein 1 homolog (616 aa).

The span at 38–50 (ESDLTDSDREDDP) shows a compositional bias: acidic residues. Disordered stretches follow at residues 38–71 (ESDL…GQDS), 204–251 (LKQT…PDTF), and 292–320 (SSLE…YSNQ). 2 stretches are compositionally biased toward polar residues: residues 62 to 71 (SETFKNGQDS) and 204 to 217 (LKQT…GNST). A coiled-coil region spans residues 550–594 (LQLLVNNLQEYIENLNVTLLESLKERDDLNSDQDDILHDLEKINN).

It belongs to the SCHIP1 family. In terms of assembly, interacts with ex; the interaction results in recruitment of Schip1 to the apical cell membrane. Interacts with Tao; the interaction enhances Tao kinase activity. Interacts with Mer. In terms of tissue distribution, in eye disks of the third instar larvae, expressed in all cells (at protein level).

The protein resides in the cell junction. It is found in the adherens junction. The protein localises to the apical cell membrane. Regulator of the Hippo/SWH (Sav/Wts/Hpo) signaling pathway, a signaling pathway that plays a pivotal role in organ size control and tumor suppression by restricting proliferation and promoting apoptosis. The core of this pathway is composed of a kinase cascade wherein Hippo (hpo), in complex with its regulatory protein Salvador (sav), phosphorylates and activates Warts (wts) in complex with its regulatory protein Mats, which in turn phosphorylates and inactivates the Yorkie (yki) oncoprotein. Schip1 promotes kinase activity of Tao and enhances phosphorylation of hpo by Tao. The protein is Schwannomin-interacting protein 1 homolog of Drosophila melanogaster (Fruit fly).